The following is a 136-amino-acid chain: Small ribosomal subunit protein uS8c (136 aa).

This sequence belongs to the universal ribosomal protein uS8 family. In terms of assembly, part of the 30S ribosomal subunit.

The protein resides in the plastid. Its subcellular location is the chloroplast. One of the primary rRNA binding proteins, it binds directly to 16S rRNA central domain where it helps coordinate assembly of the platform of the 30S subunit. The sequence is that of Small ribosomal subunit protein uS8c (rps8) from Morus indica (Mulberry).